The following is a 331-amino-acid chain: DNA-directed RNA polymerase subunit alpha (331 aa).

Residues 1 to 226 are alpha N-terminal domain (alpha-NTD); sequence MLIAQRPTLT…ELFGLARELN (226 aa). The alpha C-terminal domain (alpha-CTD) stretch occupies residues 243–331; the sequence is LSSELSMPIE…SYDEDETTTN (89 aa).

Belongs to the RNA polymerase alpha chain family. As to quaternary structure, homodimer. The RNAP catalytic core consists of 2 alpha, 1 beta, 1 beta' and 1 omega subunit. When a sigma factor is associated with the core the holoenzyme is formed, which can initiate transcription.

It catalyses the reaction RNA(n) + a ribonucleoside 5'-triphosphate = RNA(n+1) + diphosphate. DNA-dependent RNA polymerase catalyzes the transcription of DNA into RNA using the four ribonucleoside triphosphates as substrates. This chain is DNA-directed RNA polymerase subunit alpha, found in Clavibacter michiganensis subsp. michiganensis (strain NCPPB 382).